Reading from the N-terminus, the 427-residue chain is MDDLNYATLTDALEQTVFENFDDGLYIGMMSGTSLDGMDAVLCQFSEKDNTQQPMHVLATHSQDFPPRLREVLLALCQPNGIQALTPSDDEPNSELDWFGWASKEYAEFSSDVVNTLLQQSNTDSESVLAIGCHGQTVRHRPQMGFSLQLVDANIIAERTGISVVSDFRRRDMAVGGQGAPLVPAFHQALFAVPDSTRVLLNLGGIANIAVLPAISNDLVDSNEHSENQPSDSVVGYDTGPANLLLDAWTTLHTDKDYDAGGTWAQSGQVVEPLLNQLLEHPFFKKTYPKSTGREDFNLAWLQDELQKFDQASADVRYSSADVQATLTELTAISASAQINLFINASSSNAVYVCGGGALNNYLMTRLQVHLQRCKVETTASLGLEPTWVEAVAFAWLARQTLMGETGNLPAVTGASKGVVLGQVCFA.

An ATP-binding site is contributed by 32–39 (GTSLDGMD).

Belongs to the anhydro-N-acetylmuramic acid kinase family.

It catalyses the reaction 1,6-anhydro-N-acetyl-beta-muramate + ATP + H2O = N-acetyl-D-muramate 6-phosphate + ADP + H(+). It functions in the pathway amino-sugar metabolism; 1,6-anhydro-N-acetylmuramate degradation. Its pathway is cell wall biogenesis; peptidoglycan recycling. Functionally, catalyzes the specific phosphorylation of 1,6-anhydro-N-acetylmuramic acid (anhMurNAc) with the simultaneous cleavage of the 1,6-anhydro ring, generating MurNAc-6-P. Is required for the utilization of anhMurNAc either imported from the medium or derived from its own cell wall murein, and thus plays a role in cell wall recycling. This is Anhydro-N-acetylmuramic acid kinase from Psychrobacter cryohalolentis (strain ATCC BAA-1226 / DSM 17306 / VKM B-2378 / K5).